The primary structure comprises 940 residues: Testis-expressed protein 11 (940 aa).

It belongs to the SPO22 family. As to quaternary structure, interacts with SYCP2. Interacts with PBXIP1; may prevent interaction between PBXIP1 and ESR2. Interacts with SHOC1. Interacts with REDIC1. In terms of tissue distribution, testis-specific. Not expressed in adult ovaries.

The protein localises to the chromosome. Its function is as follows. Regulator of crossing-over during meiosis. Involved in initiation and/or maintenance of chromosome synapsis and formation of crossovers. The sequence is that of Testis-expressed protein 11 (TEX11) from Homo sapiens (Human).